The primary structure comprises 310 residues: MGENQTMVTEFLLLGFLLGPRIQMLLFGLFSLFYIFTLLGNGAILGLISLDSRLHTPMYFFLSHLAVVDIAYTRNTVPQMLANLLHPAKPISFAGCMTQTFLCLSFGHSECLLLVLMSYDRYVAICHPLRYSVIMTWRVCITLAVTSWTCGSLLALAHVVLILRLPFSGPHEINHFFCEILSVLRLACADTWLNQVVIFAACVFFLVGPPSLVLVSYSHILAAILRIQSGEGRRKAFSTCSSHLCVVGLFFGSAIIMYMAPKSRHPEEQQKVFFLFYSFFNPTLNPLIYSLRNGEVKGALRRALGKESHS.

Residues 1 to 24 (MGENQTMVTEFLLLGFLLGPRIQM) are Extracellular-facing. Asparagine 4 is a glycosylation site (N-linked (GlcNAc...) asparagine). The helical transmembrane segment at 25-48 (LLFGLFSLFYIFTLLGNGAILGLI) threads the bilayer. Residues 49 to 56 (SLDSRLHT) are Cytoplasmic-facing. Residues 57–78 (PMYFFLSHLAVVDIAYTRNTVP) form a helical membrane-spanning segment. The Extracellular portion of the chain corresponds to 79–99 (QMLANLLHPAKPISFAGCMTQ). An intrachain disulfide couples cysteine 96 to cysteine 188. Residues 100 to 119 (TFLCLSFGHSECLLLVLMSY) traverse the membrane as a helical segment. The Cytoplasmic portion of the chain corresponds to 120 to 138 (DRYVAICHPLRYSVIMTWR). A helical transmembrane segment spans residues 139-157 (VCITLAVTSWTCGSLLALA). At 158–195 (HVVLILRLPFSGPHEINHFFCEILSVLRLACADTWLNQ) the chain is on the extracellular side. A helical transmembrane segment spans residues 196 to 218 (VVIFAACVFFLVGPPSLVLVSYS). At 219-235 (HILAAILRIQSGEGRRK) the chain is on the cytoplasmic side. The helical transmembrane segment at 236 to 258 (AFSTCSSHLCVVGLFFGSAIIMY) threads the bilayer. The Extracellular segment spans residues 259–271 (MAPKSRHPEEQQK). The helical transmembrane segment at 272–291 (VFFLFYSFFNPTLNPLIYSL) threads the bilayer. The Cytoplasmic segment spans residues 292-310 (RNGEVKGALRRALGKESHS).

This sequence belongs to the G-protein coupled receptor 1 family.

The protein localises to the cell membrane. In terms of biological role, odorant receptor. This chain is Olfactory receptor 2A1/2A42 (OR2A1), found in Homo sapiens (Human).